The following is a 216-amino-acid chain: Small ribosomal subunit protein uS3c (216 aa).

Residues 39 to 109 (IRSYINRELE…SIRINVIELT (71 aa)) form the KH type-2 domain.

This sequence belongs to the universal ribosomal protein uS3 family. Part of the 30S ribosomal subunit.

The protein resides in the plastid. Its subcellular location is the chloroplast. In Guillardia theta (Cryptophyte), this protein is Small ribosomal subunit protein uS3c (rps3).